Here is a 351-residue protein sequence, read N- to C-terminus: Histidinol-phosphate aminotransferase 1 (351 aa).

K210 is modified (N6-(pyridoxal phosphate)lysine).

The protein belongs to the class-II pyridoxal-phosphate-dependent aminotransferase family. Histidinol-phosphate aminotransferase subfamily. Homodimer. Pyridoxal 5'-phosphate is required as a cofactor.

It catalyses the reaction L-histidinol phosphate + 2-oxoglutarate = 3-(imidazol-4-yl)-2-oxopropyl phosphate + L-glutamate. It participates in amino-acid biosynthesis; L-histidine biosynthesis; L-histidine from 5-phospho-alpha-D-ribose 1-diphosphate: step 7/9. The chain is Histidinol-phosphate aminotransferase 1 (hisC1) from Pseudomonas aeruginosa (strain ATCC 15692 / DSM 22644 / CIP 104116 / JCM 14847 / LMG 12228 / 1C / PRS 101 / PAO1).